Here is a 218-residue protein sequence, read N- to C-terminus: Dynein axonemal assembly factor 6 (218 aa).

The interval 66-103 (MGPGNIGPPKAKESKAIPEPRSDESENIWNPEEVPEGA) is disordered. Over residues 75 to 89 (KAKESKAIPEPRSDE) the composition is skewed to basic and acidic residues.

The protein belongs to the PIH1 family. Interacts with HSPA1A/B, HSP90AA1 and DNAI2. Interacts with DNAAF2 and DNAAF4. Specifically expressed in testis. Detected in pachytene spermatocytes from 5 weeks of age and in pachytene and diplotene spermatocytes of adult mice. Not detected in spermatids or mature sperm.

It is found in the cytoplasm. Its subcellular location is the golgi apparatus. The protein resides in the trans-Golgi network. In terms of biological role, plays a role in cytoplasmic pre-assembly of axonemal dynein. The chain is Dynein axonemal assembly factor 6 from Mus musculus (Mouse).